Consider the following 982-residue polypeptide: E3 ubiquitin-protein ligase CBL-B (982 aa).

Residues 35–167 (PPKQAAADRR…KAIFPNGQFQ (133 aa)) are 4H. A Cbl-PTB domain is found at 35–343 (PPKQAAADRR…GRSYNPDLTG (309 aa)). The interval 168–240 (GDNFRITKAD…FEFDIFTRLF (73 aa)) is EF-hand-like. Ca(2+)-binding residues include D221, T223, N225, Y227, and E232. The SH2-like stretch occupies residues 241–343 (QPWGSILRNW…GRSYNPDLTG (103 aa)). S282 is subject to Phosphoserine; by PKC/PRKCQ. R286 provides a ligand contact to 4-O-phospho-L-tyrosine. The segment at 344–372 (LCEPTPHDHIKVTQEQYELYCEMGSTFQL) is linker. Y363 is modified (phosphotyrosine). The segment at 373–412 (CKICAENDKDVKIEPCGHLMCTSCLTAWQESDGQGCPFCR) adopts an RING-type zinc-finger fold. The interval 466–571 (NVRKCTDRQN…PPPIPPDNRL (106 aa)) is disordered. The span at 473-486 (RQNSPVTSPGSSPL) shows a compositional bias: polar residues. 6 positions are modified to phosphoserine: S476, S480, S484, S521, S525, and S529. Positions 543–568 (PLPAPPPPLRDPPPPPPERPPPIPPD) are interaction with VAV1. Residues 544–567 (LPAPPPPLRDPPPPPPERPPPIPP) are compositionally biased toward pro residues. Position 634 is a phosphoserine (S634). Y665 and Y709 each carry phosphotyrosine. 2 disordered regions span residues 688–731 (GPLA…NVKP) and 769–929 (FDSA…EAAL). A compositionally biased stretch (polar residues) spans 715–725 (HPVSLNSQPSH). Pro residues predominate over residues 819 to 828 (PSLPPPPPPA). Residues 838–848 (PPGSSSRPSSG) show a composition bias toward low complexity. Over residues 880 to 899 (VKTNRTSQDYDQLPSCSDGS) the composition is skewed to polar residues. Residue Y889 is modified to Phosphotyrosine. An interaction with SH3KBP1 region spans residues 891–927 (QLPSCSDGSQAPARPPKPRPRRTAPEIHHRKPHGPEA). Residues 906 to 922 (PKPRPRRTAPEIHHRKP) are compositionally biased toward basic residues. Positions 931 to 970 (NVDAKIAKLMGEGYAFEEVKRALEIAQNNVEVARSILREF) constitute a UBA domain.

In terms of assembly, interacts with SH3 domain-containing proteins LCK, CRK and SORBS1. Interacts with LCP2 and ZAP70. Interacts with CBL. Interacts with SH3 domain-containing proteins VAV1, FYN, FGR, PLCG1, GRB2, CRKL, PIK3R1 and SH3KBP1/CIN85. Identified in heterotrimeric complexes with SH3KBP1/CIN85, CD2AP and ARHGEF7, where one CBLB peptide binds two copies of the other protein. Interacts with poly-ubiquitinated proteins. Dimerization is required for the binding of poly-ubiquitin, but not for the binding of mono-ubiquitin. Interacts with EGFR (phosphorylated). Interacts with IFT20. In terms of processing, phosphorylated on tyrosine and serine residues upon TCR or BCR activation, and upon various types of cell stimulation. Auto-ubiquitinated upon EGF-mediated cell activation or upon T-cell costimulation by CD28; which promotes proteasomal degradation. Expressed in placenta, heart, lung, kidney, spleen, ovary and testis, as well as fetal brain and liver and hematopoietic cell lines, but not in adult brain, liver, pancreas, salivary gland, or skeletal muscle. Present in lymphocytes (at protein level).

It is found in the cytoplasm. It catalyses the reaction S-ubiquitinyl-[E2 ubiquitin-conjugating enzyme]-L-cysteine + [acceptor protein]-L-lysine = [E2 ubiquitin-conjugating enzyme]-L-cysteine + N(6)-ubiquitinyl-[acceptor protein]-L-lysine.. It participates in protein modification; protein ubiquitination. E3 ubiquitin-protein ligase which accepts ubiquitin from specific E2 ubiquitin-conjugating enzymes, and transfers it to substrates, generally promoting their degradation by the proteasome. Negatively regulates TCR (T-cell receptor), BCR (B-cell receptor) and FCER1 (high affinity immunoglobulin epsilon receptor) signal transduction pathways. In naive T-cells, inhibits VAV1 activation upon TCR engagement and imposes a requirement for CD28 costimulation for proliferation and IL-2 production. Also acts by promoting PIK3R1/p85 ubiquitination, which impairs its recruitment to the TCR and subsequent activation. In activated T-cells, inhibits PLCG1 activation and calcium mobilization upon restimulation and promotes anergy. In B-cells, acts by ubiquitinating SYK and promoting its proteasomal degradation. Slightly promotes SRC ubiquitination. May be involved in EGFR ubiquitination and internalization. May be functionally coupled with the E2 ubiquitin-protein ligase UB2D3. In association with CBL, required for proper feedback inhibition of ciliary platelet-derived growth factor receptor-alpha (PDGFRA) signaling pathway via ubiquitination and internalization of PDGFRA. This Homo sapiens (Human) protein is E3 ubiquitin-protein ligase CBL-B (CBLB).